The chain runs to 346 residues: Cytochrome c551 peroxidase (346 aa).

A signal peptide spans 1 to 23 (MQSSQLLPLGSLLLSFATPLAQA). Heme c is bound by residues C74, C77, H78, C220, C223, H224, H284, and M298.

The cofactor is heme c. In terms of processing, binds 2 heme groups per subunit. Sequencing of the whole protein indicates about 20% starts on Val-247.

The protein localises to the periplasm. It catalyses the reaction 2 Fe(II)-[cytochrome c] + H2O2 + 2 H(+) = 2 Fe(III)-[cytochrome c] + 2 H2O. In terms of biological role, catalyzes the peroxidative oxidation of azurin and cytochrome c551. Likely to provide protection against toxic peroxides. The chain is Cytochrome c551 peroxidase (ccpA) from Pseudomonas aeruginosa (strain ATCC 15692 / DSM 22644 / CIP 104116 / JCM 14847 / LMG 12228 / 1C / PRS 101 / PAO1).